The chain runs to 90 residues: Probable Fe(2+)-trafficking protein (90 aa).

It belongs to the Fe(2+)-trafficking protein family.

Its function is as follows. Could be a mediator in iron transactions between iron acquisition and iron-requiring processes, such as synthesis and/or repair of Fe-S clusters in biosynthetic enzymes. The protein is Probable Fe(2+)-trafficking protein of Acinetobacter baylyi (strain ATCC 33305 / BD413 / ADP1).